The following is a 298-amino-acid chain: Bifunctional protein FolD (298 aa).

Residues 165–167 (GRS), Ser-190, and Ile-231 contribute to the NADP(+) site.

Belongs to the tetrahydrofolate dehydrogenase/cyclohydrolase family. As to quaternary structure, homodimer.

It carries out the reaction (6R)-5,10-methylene-5,6,7,8-tetrahydrofolate + NADP(+) = (6R)-5,10-methenyltetrahydrofolate + NADPH. The enzyme catalyses (6R)-5,10-methenyltetrahydrofolate + H2O = (6R)-10-formyltetrahydrofolate + H(+). It participates in one-carbon metabolism; tetrahydrofolate interconversion. Its function is as follows. Catalyzes the oxidation of 5,10-methylenetetrahydrofolate to 5,10-methenyltetrahydrofolate and then the hydrolysis of 5,10-methenyltetrahydrofolate to 10-formyltetrahydrofolate. The chain is Bifunctional protein FolD from Prochlorococcus marinus subsp. pastoris (strain CCMP1986 / NIES-2087 / MED4).